Consider the following 48-residue polypeptide: Large ribosomal subunit protein eL40 (48 aa).

The protein belongs to the eukaryotic ribosomal protein eL40 family.

This is Large ribosomal subunit protein eL40 from Methanosphaera stadtmanae (strain ATCC 43021 / DSM 3091 / JCM 11832 / MCB-3).